The sequence spans 273 residues: Exosome complex component Rrp42 (273 aa).

It belongs to the RNase PH family. Rrp42 subfamily. As to quaternary structure, component of the archaeal exosome complex. Forms a hexameric ring-like arrangement composed of 3 Rrp41-Rrp42 heterodimers. The hexameric ring associates with a trimer of Rrp4 and/or Csl4 subunits.

The protein localises to the cytoplasm. Its function is as follows. Non-catalytic component of the exosome, which is a complex involved in RNA degradation. Contributes to the structuring of the Rrp41 active site. This Thermococcus gammatolerans (strain DSM 15229 / JCM 11827 / EJ3) protein is Exosome complex component Rrp42.